A 1933-amino-acid chain; its full sequence is WD repeat-containing protein 81 (1933 aa).

Residues 1 to 643 form a necessary and sufficient for the interaction with SQSTM1 region; that stretch reads MAQGSRRRKV…TPCESGWTRE (643 aa). 6 disordered regions span residues 305 to 334, 663 to 714, 1038 to 1057, 1090 to 1209, 1517 to 1544, and 1565 to 1590; these read PSED…RPGC, SIPG…GKIV, CAFG…SGLG, QPQE…EGKE, SLRN…SCLQ, and DSQP…SRNE. The segment covering 314 to 330 has biased composition (basic and acidic residues); sequence SEEKDRTGVKSEKDGEG. The 278-residue stretch at 333 to 610 folds into the BEACH domain; the sequence is GCPTCQKELR…IPRLLVQPIQ (278 aa). Low complexity predominate over residues 668 to 693; it reads AGDQPGSSSSQASPGLLPFSAPSGSR. Polar residues-rich tracts occupy residues 1100 to 1112 and 1131 to 1140; these read GQLS…SEAS and VKSGDSSQDL. Positions 1145–1166 are enriched in acidic residues; sequence GSEEEEEEEEGCVVLEEEEQDE. WD repeat units follow at residues 1638-1677, 1684-1724, 1776-1815, 1818-1856, and 1903-1933; these read GHTG…DGTS, IYAQ…TLRT, LNPG…VLRG, AHEG…PTHH, and NFRG…RLLA.

This sequence belongs to the WD repeat WDR81 family. In terms of assembly, interacts with WDR91; involved in early to late endosome cargo transport. Interacts with BECN1; negatively regulates the PI3 kinase/PI3K activity associated with endosomal membranes. Interacts with SQSTM1; the interaction is direct and regulates the interaction of SQSTM1 with ubiquitinated proteins. Interacts with MAP1LC3C; recruits MAP1LC3C to ubiquitinated protein aggregates in the aggrephagy process.

It is found in the early endosome membrane. It localises to the late endosome membrane. The protein resides in the lysosome membrane. Its subcellular location is the cytoplasmic vesicle. The protein localises to the autophagosome membrane. It is found in the mitochondrion. It localises to the cytoplasm. The protein resides in the cytosol. Its function is as follows. Functions as a negative regulator of the PI3 kinase/PI3K activity associated with endosomal membranes via BECN1, a core subunit of the PI3K complex. By modifying the phosphatidylinositol 3-phosphate/PtdInsP3 content of endosomal membranes may regulate endosome fusion, recycling, sorting and early to late endosome transport. It is for instance, required for the delivery of cargos like BST2/tetherin from early to late endosome and thereby participates indirectly to their degradation by the lysosome. May also play a role in aggrephagy, the macroautophagic degradation of ubiquitinated protein aggregates. In this process, may regulate the interaction of SQSTM1 with ubiquitinated proteins and also recruit MAP1LC3C. May also be involved in maintenance of normal mitochondrial structure and organization. The protein is WD repeat-containing protein 81 of Rattus norvegicus (Rat).